A 364-amino-acid polypeptide reads, in one-letter code: Glycerophosphodiester phosphodiesterase (364 aa).

Residues 1–18 (MKLKTLALSLLAAGVLAG) form the signal peptide. A lipid anchor (N-palmitoyl cysteine) is attached at C19. C19 is lipidated: S-diacylglycerol cysteine. One can recognise a GP-PDE domain in the interval 35–360 (KIIIAHRGAS…DFPDTGVEFL (326 aa)). Catalysis depends on H40, which acts as the Proton acceptor. Ca(2+) is bound by residues E67 and D69. H82 (proton donor) is an active-site residue. Residue E175 participates in Ca(2+) binding.

This sequence belongs to the glycerophosphoryl diester phosphodiesterase family. Ca(2+) is required as a cofactor. Post-translationally, contains both ester- and amide-linked fatty acids.

The protein resides in the cell outer membrane. The enzyme catalyses a sn-glycero-3-phosphodiester + H2O = an alcohol + sn-glycerol 3-phosphate + H(+). Functionally, glycerophosphodiester phosphodiesterase hydrolyzes glycerophosphodiesters into glycerol-3-phosphate (G3P) and the corresponding alcohol. Has a specific affinity for human immunoglobulin D myeloma protein. The protein is Glycerophosphodiester phosphodiesterase (glpQ) of Haemophilus influenzae (strain ATCC 51907 / DSM 11121 / KW20 / Rd).